A 266-amino-acid chain; its full sequence is Undecaprenyl-diphosphatase (266 aa).

Transmembrane regions (helical) follow at residues 39-59 (PGAS…AYYF), 86-106 (SIFI…IFIP), 112-132 (VLRS…FMYL), 147-167 (NFSN…PGVS), 189-209 (FSFL…FVSS), 216-236 (LGFF…LLAI), and 246-266 (NGLK…LLNL).

This sequence belongs to the UppP family.

It is found in the cell inner membrane. The enzyme catalyses di-trans,octa-cis-undecaprenyl diphosphate + H2O = di-trans,octa-cis-undecaprenyl phosphate + phosphate + H(+). In terms of biological role, catalyzes the dephosphorylation of undecaprenyl diphosphate (UPP). Confers resistance to bacitracin. This Prochlorococcus marinus (strain MIT 9301) protein is Undecaprenyl-diphosphatase.